The following is a 434-amino-acid chain: Cullin-like protein 5 (434 aa).

Positions 1–34 (MKRSISPDPFSSTKSPKLVHHSPDDGGAEGNPYR) are disordered.

Belongs to the cullin family.

The protein is Cullin-like protein 5 of Arabidopsis thaliana (Mouse-ear cress).